The chain runs to 1157 residues: DNA-directed RNA polymerase subunit beta (1157 aa).

Belongs to the RNA polymerase beta chain family. In terms of assembly, the RNAP catalytic core consists of 2 alpha, 1 beta, 1 beta' and 1 omega subunit. When a sigma factor is associated with the core the holoenzyme is formed, which can initiate transcription.

The catalysed reaction is RNA(n) + a ribonucleoside 5'-triphosphate = RNA(n+1) + diphosphate. In terms of biological role, DNA-dependent RNA polymerase catalyzes the transcription of DNA into RNA using the four ribonucleoside triphosphates as substrates. This chain is DNA-directed RNA polymerase subunit beta, found in Tropheryma whipplei (strain Twist) (Whipple's bacillus).